The chain runs to 181 residues: Isopentenyl-diphosphate Delta-isomerase (181 aa).

Mn(2+) is bound by residues His-25 and His-32. Residues Pro-30–Met-164 form the Nudix hydrolase domain. Cys-67 is a catalytic residue. Cys-67 contacts Mg(2+). His-69 lines the Mn(2+) pocket. Residue Glu-87 participates in Mg(2+) binding. Mn(2+) is bound by residues Glu-114 and Glu-116. Glu-116 is a catalytic residue.

It belongs to the IPP isomerase type 1 family. As to quaternary structure, homodimer. Mg(2+) serves as cofactor. Requires Mn(2+) as cofactor.

It localises to the cytoplasm. It catalyses the reaction isopentenyl diphosphate = dimethylallyl diphosphate. It participates in isoprenoid biosynthesis; dimethylallyl diphosphate biosynthesis; dimethylallyl diphosphate from isopentenyl diphosphate: step 1/1. Functionally, catalyzes the 1,3-allylic rearrangement of the homoallylic substrate isopentenyl (IPP) to its highly electrophilic allylic isomer, dimethylallyl diphosphate (DMAPP). This is Isopentenyl-diphosphate Delta-isomerase from Salmonella choleraesuis (strain SC-B67).